We begin with the raw amino-acid sequence, 569 residues long: Proline--tRNA ligase (569 aa).

The protein belongs to the class-II aminoacyl-tRNA synthetase family. ProS type 1 subfamily. As to quaternary structure, homodimer.

Its subcellular location is the cytoplasm. It catalyses the reaction tRNA(Pro) + L-proline + ATP = L-prolyl-tRNA(Pro) + AMP + diphosphate. Its function is as follows. Catalyzes the attachment of proline to tRNA(Pro) in a two-step reaction: proline is first activated by ATP to form Pro-AMP and then transferred to the acceptor end of tRNA(Pro). As ProRS can inadvertently accommodate and process non-cognate amino acids such as alanine and cysteine, to avoid such errors it has two additional distinct editing activities against alanine. One activity is designated as 'pretransfer' editing and involves the tRNA(Pro)-independent hydrolysis of activated Ala-AMP. The other activity is designated 'posttransfer' editing and involves deacylation of mischarged Ala-tRNA(Pro). The misacylated Cys-tRNA(Pro) is not edited by ProRS. The sequence is that of Proline--tRNA ligase from Desulforamulus reducens (strain ATCC BAA-1160 / DSM 100696 / MI-1) (Desulfotomaculum reducens).